Here is a 395-residue protein sequence, read N- to C-terminus: Homoserine O-acetyltransferase (395 aa).

Residues 65–363 (PIVLIEHALT…SPTGHDGFLI (299 aa)) form the AB hydrolase-1 domain. Ser160 functions as the Nucleophile in the catalytic mechanism. Arg230 lines the substrate pocket. Residues Asp328 and His358 contribute to the active site. A substrate-binding site is contributed by Asp359.

Belongs to the AB hydrolase superfamily. MetX family. In terms of assembly, homodimer.

It is found in the cytoplasm. It catalyses the reaction L-homoserine + acetyl-CoA = O-acetyl-L-homoserine + CoA. The protein operates within amino-acid biosynthesis; L-methionine biosynthesis via de novo pathway; O-acetyl-L-homoserine from L-homoserine: step 1/1. Its function is as follows. Transfers an acetyl group from acetyl-CoA to L-homoserine, forming acetyl-L-homoserine. The protein is Homoserine O-acetyltransferase of Corynebacterium jeikeium (strain K411).